The primary structure comprises 394 residues: NAD(P)H-quinone oxidoreductase subunit H (394 aa).

It belongs to the complex I 49 kDa subunit family. As to quaternary structure, NDH-1 can be composed of about 15 different subunits; different subcomplexes with different compositions have been identified which probably have different functions.

It localises to the cellular thylakoid membrane. It catalyses the reaction a plastoquinone + NADH + (n+1) H(+)(in) = a plastoquinol + NAD(+) + n H(+)(out). The enzyme catalyses a plastoquinone + NADPH + (n+1) H(+)(in) = a plastoquinol + NADP(+) + n H(+)(out). Functionally, NDH-1 shuttles electrons from an unknown electron donor, via FMN and iron-sulfur (Fe-S) centers, to quinones in the respiratory and/or the photosynthetic chain. The immediate electron acceptor for the enzyme in this species is believed to be plastoquinone. Couples the redox reaction to proton translocation, and thus conserves the redox energy in a proton gradient. Cyanobacterial NDH-1 also plays a role in inorganic carbon-concentration. This Nostoc sp. (strain PCC 7120 / SAG 25.82 / UTEX 2576) protein is NAD(P)H-quinone oxidoreductase subunit H.